A 336-amino-acid chain; its full sequence is D-alanine--D-alanine ligase (336 aa).

The ATP-grasp domain occupies 124–330; that stretch reads KMWFSALGIP…FTEYLSLVIN (207 aa). Residue 154–209 coordinates ATP; it reads ALENWGSIFVKAASQGSSVGCYKVDDSSKVAGVLKDAFGYAPYVIVEKTIKARELE. Residues Asp284, Glu297, and Asn299 each contribute to the Mg(2+) site.

It belongs to the D-alanine--D-alanine ligase family. Mg(2+) is required as a cofactor. Mn(2+) serves as cofactor.

The protein resides in the cytoplasm. It catalyses the reaction 2 D-alanine + ATP = D-alanyl-D-alanine + ADP + phosphate + H(+). Its pathway is cell wall biogenesis; peptidoglycan biosynthesis. Cell wall formation. In Shewanella sp. (strain MR-4), this protein is D-alanine--D-alanine ligase.